Reading from the N-terminus, the 152-residue chain is Nucleoside diphosphate kinase (152 aa).

ATP-binding residues include Lys11, Phe59, Arg87, Thr93, Arg104, and Asn114. His117 serves as the catalytic Pros-phosphohistidine intermediate.

The protein belongs to the NDK family. As to quaternary structure, homotetramer. The cofactor is Mg(2+).

The protein resides in the cytoplasm. It carries out the reaction a 2'-deoxyribonucleoside 5'-diphosphate + ATP = a 2'-deoxyribonucleoside 5'-triphosphate + ADP. It catalyses the reaction a ribonucleoside 5'-diphosphate + ATP = a ribonucleoside 5'-triphosphate + ADP. In terms of biological role, major role in the synthesis of nucleoside triphosphates other than ATP. The ATP gamma phosphate is transferred to the NDP beta phosphate via a ping-pong mechanism, using a phosphorylated active-site intermediate. The sequence is that of Nucleoside diphosphate kinase from Prochlorococcus marinus subsp. pastoris (strain CCMP1986 / NIES-2087 / MED4).